The sequence spans 79 residues: Dicentracin (79 aa).

The signal sequence occupies residues 1 to 22; sequence MKCATLFLVLSMVVLMAEPGDA. The residue at position 44 (Gly-44) is a Glycine amide. The propeptide occupies 47-79; that stretch reads AQQDQQDQQYQQDQQDQQAEQYQRFNRERAAFD. A disordered region spans residues 48 to 67; that stretch reads QQDQQDQQYQQDQQDQQAEQ.

It belongs to the pleurocidin family.

It localises to the secreted. The protein is Dicentracin of Dicentrarchus labrax (European seabass).